The primary structure comprises 273 residues: Large ribosomal subunit protein uL2cy (273 aa).

Disordered stretches follow at residues 1 to 27 and 224 to 273; these read MAIH…SNPR and NPVD…RRRK.

The protein belongs to the universal ribosomal protein uL2 family. As to quaternary structure, part of the 50S ribosomal subunit.

It is found in the plastid. Its subcellular location is the chloroplast. This is Large ribosomal subunit protein uL2cy (rpl2-B) from Liriodendron tulipifera (Tuliptree).